We begin with the raw amino-acid sequence, 235 residues long: Secretory carrier-associated membrane protein 5 (235 aa).

The Cytoplasmic segment spans residues 1–39 (MAEKVNNFPPLPKFIPLKPCFYQDFEADIPPQHVSMTKR). A helical membrane pass occupies residues 40 to 60 (LYYLWMLNSVTLAVNLVGCLA). The Extracellular portion of the chain corresponds to 61-67 (WLIGGGG). A helical transmembrane segment spans residues 68-88 (ATNFGLAFLWLILFTPCSYVC). At 89–102 (WFRPIYKAFKTDSS) the chain is on the cytoplasmic side. Residues 103–125 (FSFMAFFFTFMAQLVISIIQAVG) traverse the membrane as a helical segment. At 126–148 (IPGWGVCGWIATISFFGTNIGSA) the chain is on the extracellular side. The chain crosses the membrane as a helical span at residues 149–169 (VVMLIPTVMFTVMAVFSFIAL). At 170-235 (SMVHKFYRGS…TPNYTYSNEM (66 aa)) the chain is on the cytoplasmic side.

Belongs to the SCAMP family. SCAMP5 subfamily. In terms of assembly, interacts (via C-terminal part) with SYT1 and SYT2; interaction with synaptotagmins making a link with the SNARE molecules. Interacts with SLC9A7. Expressed both by neuronal and non-neuronal tissues. Expressed in brain, stomach, thyroid, spinal cord, lymph node, trachea, adrenal gland, bone marrow and in the different parts of brain. In thyroid tissues, it is expressed by the follicular epithelial cells. In the adrenal gland tissues it is detected in the zona fasciculata of the cortex region (at protein level).

The protein localises to the cell membrane. It is found in the golgi apparatus membrane. It localises to the golgi apparatus. Its subcellular location is the trans-Golgi network membrane. The protein resides in the recycling endosome membrane. The protein localises to the cytoplasmic vesicle. It is found in the secretory vesicle. It localises to the synaptic vesicle membrane. Functionally, required for the calcium-dependent exocytosis of signal sequence-containing cytokines such as CCL5. Probably acts in cooperation with the SNARE machinery. May play a role in accumulation of expanded polyglutamine (polyQ) protein huntingtin (HTT) in case of endoplasmic reticulum stress by inhibiting the endocytosis pathway. The protein is Secretory carrier-associated membrane protein 5 (SCAMP5) of Homo sapiens (Human).